Here is a 609-residue protein sequence, read N- to C-terminus: Invertase (609 aa).

A signal peptide spans 1–14 (MLKLLSLMVPLASA). Residues asparagine 23, asparagine 32, and asparagine 36 are each glycosylated (N-linked (GlcNAc...) asparagine). Substrate is bound by residues 56–59 (WMND), glutamine 77, and 119–120 (FS). Residue aspartate 59 is part of the active site. 3 N-linked (GlcNAc...) asparagine glycosylation sites follow: asparagine 128, asparagine 129, and asparagine 135. 187 to 188 (RD) serves as a coordination point for substrate. Residues asparagine 227 and asparagine 233 are each glycosylated (N-linked (GlcNAc...) asparagine). Residue glutamate 245 participates in substrate binding. N-linked (GlcNAc...) asparagine glycans are attached at residues asparagine 257, asparagine 267, asparagine 277, asparagine 284, asparagine 291, asparagine 298, asparagine 303, and asparagine 345. Substrate is bound at residue tryptophan 389. N-linked (GlcNAc...) asparagine glycosylation is found at asparagine 409, asparagine 420, asparagine 440, asparagine 448, asparagine 452, asparagine 477, asparagine 545, and asparagine 566.

The protein belongs to the glycosyl hydrolase 32 family.

It catalyses the reaction Hydrolysis of terminal non-reducing beta-D-fructofuranoside residues in beta-D-fructofuranosides.. The sequence is that of Invertase (INV1) from Kluyveromyces lactis (strain ATCC 8585 / CBS 2359 / DSM 70799 / NBRC 1267 / NRRL Y-1140 / WM37) (Yeast).